The sequence spans 155 residues: 6,7-dimethyl-8-ribityllumazine synthase (155 aa).

5-amino-6-(D-ribitylamino)uracil-binding positions include Trp-24, 58–60 (AFE), and 82–84 (AVI). (2S)-2-hydroxy-3-oxobutyl phosphate is bound at residue 87–88 (GT). His-90 acts as the Proton donor in catalysis. Phe-115 contributes to the 5-amino-6-(D-ribitylamino)uracil binding site. Arg-129 is a (2S)-2-hydroxy-3-oxobutyl phosphate binding site.

The protein belongs to the DMRL synthase family. As to quaternary structure, forms an icosahedral capsid composed of 60 subunits, arranged as a dodecamer of pentamers.

The enzyme catalyses (2S)-2-hydroxy-3-oxobutyl phosphate + 5-amino-6-(D-ribitylamino)uracil = 6,7-dimethyl-8-(1-D-ribityl)lumazine + phosphate + 2 H2O + H(+). The protein operates within cofactor biosynthesis; riboflavin biosynthesis; riboflavin from 2-hydroxy-3-oxobutyl phosphate and 5-amino-6-(D-ribitylamino)uracil: step 1/2. Functionally, catalyzes the formation of 6,7-dimethyl-8-ribityllumazine by condensation of 5-amino-6-(D-ribitylamino)uracil with 3,4-dihydroxy-2-butanone 4-phosphate. This is the penultimate step in the biosynthesis of riboflavin. In Teredinibacter turnerae (strain ATCC 39867 / T7901), this protein is 6,7-dimethyl-8-ribityllumazine synthase.